Here is a 374-residue protein sequence, read N- to C-terminus: Very late expression factor 1 (374 aa).

Residues 169-349 (AIDTILNFID…NFDESSSDEE (181 aa)) form the Tyr recombinase domain. Residues Arg-210, Lys-239, Arg-303, and His-326 contribute to the active site. A disordered region spans residues 328–374 (SPASTKPYLNKYNFDESSSDEESGGNNRDSSTGSSANSSSLYYQTGD). Tyr-335 serves as the catalytic O-(3'-phospho-DNA)-tyrosine intermediate. A compositionally biased stretch (low complexity) spans 357-367 (SSTGSSANSSS).

The protein belongs to the 'phage' integrase family.

Functionally, involved in very late gene activation. This is Very late expression factor 1 (VLF-1) from Orgyia pseudotsugata (Douglas-fir tussock moth).